We begin with the raw amino-acid sequence, 448 residues long: Nuclear distribution protein PAC1 (448 aa).

The 33-residue stretch at 9 to 41 (QAEELHKSIIAYLAANNFQDSVTAMRTELNLGE) folds into the LisH domain. Residues 74–95 (SATPTSLSNRKQDPASWLPAGP) are disordered. WD repeat units follow at residues 102-143 (SHRT…RTVK), 145-185 (HTKA…KNIR), 189-236 (GHDH…CLKT), 239-278 (GHSD…PETK), 283-343 (GHEH…IKTL), 345-384 (GHDN…KCVK), and 389-444 (MHEH…TSLR).

It belongs to the WD repeat LIS1/nudF family. As to quaternary structure, self-associates. Interacts with NDL1 and dynein.

Its subcellular location is the cytoplasm. The protein resides in the cytoskeleton. It localises to the spindle pole. Functionally, positively regulates the activity of the minus-end directed microtubule motor protein dynein. May enhance dynein-mediated microtubule sliding by targeting dynein to the microtubule plus end. Required for nuclear migration during vegetative growth as well as development. Required for retrograde early endosome (EE) transport from the hyphal tip. Required for localization of dynein to the mitotic spindle poles. Recruits additional proteins to the dynein complex at SPBs. This Fusarium vanettenii (strain ATCC MYA-4622 / CBS 123669 / FGSC 9596 / NRRL 45880 / 77-13-4) (Fusarium solani subsp. pisi) protein is Nuclear distribution protein PAC1.